Here is a 203-residue protein sequence, read N- to C-terminus: Small ribosomal subunit protein uS4c (203 aa).

Positions M91–I154 constitute an S4 RNA-binding domain.

This sequence belongs to the universal ribosomal protein uS4 family. In terms of assembly, part of the 30S ribosomal subunit. Contacts protein S5. The interaction surface between S4 and S5 is involved in control of translational fidelity.

The protein localises to the plastid. It is found in the chloroplast. One of the primary rRNA binding proteins, it binds directly to 16S rRNA where it nucleates assembly of the body of the 30S subunit. In terms of biological role, with S5 and S12 plays an important role in translational accuracy. The polypeptide is Small ribosomal subunit protein uS4c (rps4) (Lopidium struthiopteris (Moss)).